Reading from the N-terminus, the 184-residue chain is mRNA transport regulator MTR2 (184 aa).

A disordered region spans residues 111 to 135 (KMGQDATVPIQPNNTGNRNRPNDMN). Residues 120–129 (IQPNNTGNRN) show a composition bias toward polar residues. Thr125 bears the Phosphothreonine mark.

Interacts with MEX67.

Its subcellular location is the nucleus. Affects mRNA transport from the nucleus to the cytoplasm. The chain is mRNA transport regulator MTR2 (MTR2) from Saccharomyces cerevisiae (strain ATCC 204508 / S288c) (Baker's yeast).